A 96-amino-acid chain; its full sequence is Aspartyl/glutamyl-tRNA(Asn/Gln) amidotransferase subunit C (96 aa).

It belongs to the GatC family. In terms of assembly, heterotrimer of A, B and C subunits.

The enzyme catalyses L-glutamyl-tRNA(Gln) + L-glutamine + ATP + H2O = L-glutaminyl-tRNA(Gln) + L-glutamate + ADP + phosphate + H(+). It catalyses the reaction L-aspartyl-tRNA(Asn) + L-glutamine + ATP + H2O = L-asparaginyl-tRNA(Asn) + L-glutamate + ADP + phosphate + 2 H(+). Allows the formation of correctly charged Asn-tRNA(Asn) or Gln-tRNA(Gln) through the transamidation of misacylated Asp-tRNA(Asn) or Glu-tRNA(Gln) in organisms which lack either or both of asparaginyl-tRNA or glutaminyl-tRNA synthetases. The reaction takes place in the presence of glutamine and ATP through an activated phospho-Asp-tRNA(Asn) or phospho-Glu-tRNA(Gln). The protein is Aspartyl/glutamyl-tRNA(Asn/Gln) amidotransferase subunit C of Trichormus variabilis (strain ATCC 29413 / PCC 7937) (Anabaena variabilis).